The sequence spans 157 residues: Cyclic pyranopterin monophosphate synthase (157 aa).

Substrate is bound by residues 74 to 76 (MCH) and 112 to 113 (ME). Residue Asp-127 is part of the active site.

Belongs to the MoaC family. As to quaternary structure, homohexamer; trimer of dimers.

The enzyme catalyses (8S)-3',8-cyclo-7,8-dihydroguanosine 5'-triphosphate = cyclic pyranopterin phosphate + diphosphate. Its pathway is cofactor biosynthesis; molybdopterin biosynthesis. Functionally, catalyzes the conversion of (8S)-3',8-cyclo-7,8-dihydroguanosine 5'-triphosphate to cyclic pyranopterin monophosphate (cPMP). This is Cyclic pyranopterin monophosphate synthase from Syntrophomonas wolfei subsp. wolfei (strain DSM 2245B / Goettingen).